A 163-amino-acid chain; its full sequence is Ribosome maturation factor RimP (163 aa).

Residues 66 to 85 form a disordered region; the sequence is ALDRDDPVPGPPYELEVSSP.

It belongs to the RimP family.

It localises to the cytoplasm. In terms of biological role, required for maturation of 30S ribosomal subunits. The chain is Ribosome maturation factor RimP from Kocuria rhizophila (strain ATCC 9341 / DSM 348 / NBRC 103217 / DC2201).